The following is a 171-amino-acid chain: Secretion monitor (171 aa).

Residues 1 to 36 form the signal peptide; it reads MIGILNRWRQFGRRYFWPHLLLGMVAASLGLPTSLN.

The protein belongs to the SecM family.

The protein localises to the cytoplasm. Its subcellular location is the cytosol. It is found in the periplasm. Its function is as follows. Regulates secA expression by translational coupling of the secM secA operon. Translational pausing at a specific Pro residue 5 residues before the end of the protein may allow disruption of a mRNA repressor helix that normally suppresses secA translation initiation. In Pectobacterium carotovorum subsp. carotovorum (strain PC1), this protein is Secretion monitor.